The chain runs to 690 residues: Glycine--tRNA ligase beta subunit (690 aa).

It belongs to the class-II aminoacyl-tRNA synthetase family. In terms of assembly, tetramer of two alpha and two beta subunits.

It is found in the cytoplasm. The enzyme catalyses tRNA(Gly) + glycine + ATP = glycyl-tRNA(Gly) + AMP + diphosphate. The sequence is that of Glycine--tRNA ligase beta subunit from Proteus mirabilis (strain HI4320).